The sequence spans 197 residues: Imidazoleglycerol-phosphate dehydratase (197 aa).

This sequence belongs to the imidazoleglycerol-phosphate dehydratase family.

The protein resides in the cytoplasm. It catalyses the reaction D-erythro-1-(imidazol-4-yl)glycerol 3-phosphate = 3-(imidazol-4-yl)-2-oxopropyl phosphate + H2O. Its pathway is amino-acid biosynthesis; L-histidine biosynthesis; L-histidine from 5-phospho-alpha-D-ribose 1-diphosphate: step 6/9. This Cellvibrio japonicus (strain Ueda107) (Pseudomonas fluorescens subsp. cellulosa) protein is Imidazoleglycerol-phosphate dehydratase.